Consider the following 107-residue polypeptide: uncharacterized protein (107 aa).

The chain crosses the membrane as a helical span at residues 12–32 (IILNIFLALLLVYFIFHCIYG).

Its subcellular location is the membrane. This is an uncharacterized protein from Rickettsia prowazekii (strain Madrid E).